Here is a 600-residue protein sequence, read N- to C-terminus: Glutamine--fructose-6-phosphate aminotransferase [isomerizing] (600 aa).

Cysteine 2 acts as the Nucleophile; for GATase activity in catalysis. In terms of domain architecture, Glutamine amidotransferase type-2 spans cysteine 2–aspartate 217. SIS domains lie at isoleucine 283–lysine 422 and isoleucine 452–proline 590. Lysine 595 (for Fru-6P isomerization activity) is an active-site residue.

As to quaternary structure, homodimer.

Its subcellular location is the cytoplasm. It catalyses the reaction D-fructose 6-phosphate + L-glutamine = D-glucosamine 6-phosphate + L-glutamate. Its function is as follows. Catalyzes the first step in hexosamine metabolism, converting fructose-6P into glucosamine-6P using glutamine as a nitrogen source. This chain is Glutamine--fructose-6-phosphate aminotransferase [isomerizing], found in Shouchella clausii (strain KSM-K16) (Alkalihalobacillus clausii).